We begin with the raw amino-acid sequence, 663 residues long: uncharacterized protein (663 aa).

Positions M1–A29 are cleaved as a signal peptide.

It belongs to the bacterial solute-binding protein 5 family.

It localises to the periplasm. Functionally, possible binding-protein with either a transport or enzymatic activity. This is an uncharacterized protein from Sinorhizobium fredii (strain NBRC 101917 / NGR234).